Here is a 248-residue protein sequence, read N- to C-terminus: UPF0246 protein A1I_02510 (248 aa).

Belongs to the UPF0246 family.

The sequence is that of UPF0246 protein A1I_02510 from Rickettsia bellii (strain OSU 85-389).